The primary structure comprises 2603 residues: Ankyrin repeat domain-containing protein 17 (2603 aa).

The residue at position 1 (Met1) is an N-acetylmethionine. Residues 1–32 are compositionally biased toward low complexity; the sequence is MEKATVPAAAEGEGSPPAAAAVAAPPAAAAAE. Positions 1 to 127 are disordered; the sequence is MEKATVPAAA…DDDEEEEVSE (127 aa). Phosphoserine occurs at positions 15 and 42. Over residues 68 to 77 the composition is skewed to basic residues; that stretch reads PHHKAKRNRT. The span at 82–92 shows a compositional bias: low complexity; that stretch reads SSSESSSDSDN. Residues 93–107 are compositionally biased toward gly residues; sequence SGGGGGGGGGGGGGT. The segment covering 112 to 127 has biased composition (acidic residues); sequence SEEEEDDDDEEEEVSE. Ser152 carries the post-translational modification Phosphoserine. ANK repeat units follow at residues 229 to 258, 262 to 291, 296 to 325, 329 to 358, 362 to 391, 396 to 425, 429 to 458, 462 to 491, 495 to 524, 529 to 558, 559 to 588, 592 to 621, 625 to 654, 659 to 688, and 692 to 721; these read SDNR…SVNE, EGES…NVED, GDIT…DVNA, TGNT…SIED, NGHT…GINT, FKES…DQEH, EMHT…QVNM, SFES…SLEE, EGYT…NINA, TQET…DIEL, GCST…NVHA, TGDT…DLEH, GGRT…NVNR, NDHT…DPTH, and DGST…NLLA. Residue Lys314 forms a Glycyl lysine isopeptide (Lys-Gly) (interchain with G-Cter in SUMO2) linkage. The tract at residues 770–792 is disordered; sequence VRSKAASKQKSNSHLPANSQDVQ. Residues 775–792 show a composition bias toward polar residues; that stretch reads ASKQKSNSHLPANSQDVQ. A Phosphoserine modification is found at Ser799. 10 ANK repeats span residues 1078-1107, 1111-1140, 1145-1174, 1178-1207, 1213-1242, 1247-1276, 1280-1309, 1315-1344, 1348-1377, and 1381-1410; these read NHDT…SIEH, KGFT…DIEA, TKDT…NKEH, SDYT…EINS, LGIS…DINA, NRNT…NVEH, TGLT…DVNA, SRDT…HIDV, KGNT…DVDA, and RKIT…QFPS. Positions 1438-1522 form a coiled coil; the sequence is VQAKDRQAAE…EKEKLKVEEE (85 aa). The residue at position 1453 (Ser1453) is a Phosphoserine. Disordered regions lie at residues 1475 to 1496 and 1513 to 1713; these read AKRE…RKLE and EKEK…PKRE. The segment covering 1477-1487 has biased composition (basic residues); it reads REKRKEKRRKK. 3 stretches are compositionally biased toward low complexity: residues 1526–1546, 1598–1607, and 1616–1636; these read LTEP…TWTT, ESKSSSTSES, and SSCS…NHAS. Phosphoserine is present on Ser1631. Composition is skewed to polar residues over residues 1638-1648 and 1671-1699; these read VVTTTMASKKQ and LSET…SPNG. Residues Ser1692, Ser1696, and Ser1705 each carry the phosphoserine modification. The region spanning 1721 to 1785 is the KH domain; sequence RRSKKVSVPS…ESTRQATQLI (65 aa). Arg1870 is modified (asymmetric dimethylarginine). 3 disordered regions span residues 1902–1991, 2007–2195, and 2269–2327; these read PRLP…PSVR, TTVT…SSSA, and VSSQ…YGSV. 2 stretches are compositionally biased toward low complexity: residues 1946 to 1989 and 2007 to 2024; these read SNQN…SSPS and TTVT…TNAT. 6 positions are modified to phosphoserine: Ser2038, Ser2040, Ser2041, Ser2043, Ser2055, and Ser2063. Composition is skewed to low complexity over residues 2068–2077, 2087–2108, and 2175–2189; these read ASASEQEASS, RPPH…QQPP, and PPSH…TPAP. The span at 2269-2298 shows a compositional bias: polar residues; it reads VSSQSTPESMLSGKSSYLPNSDPLHQSDTS. Residues 2303–2313 show a composition bias toward pro residues; that stretch reads FRPPLQRPAPS. Position 2373 is a phosphoserine (Ser2373). Positions 2378-2447 are disordered; that stretch reads LTPCSSASNE…TGTSAPSVIG (70 aa). A compositionally biased stretch (polar residues) spans 2379–2391; that stretch reads TPCSSASNESPAQ. Residues 2392 to 2411 are compositionally biased toward low complexity; that stretch reads SVSSGVRAPSPAPSSVPLGS. Phosphoserine is present on Ser2401. A compositionally biased stretch (polar residues) spans 2435-2447; the sequence is IRQTGTSAPSVIG.

Interacts (via N-terminus) with NOD2. Interacts with CDK2, MCM3, MCM5, MCM7, CDC6 and PCNA. Interacts with MAVS and IFIH1. Interacts (via the second ankyrin repeat cluster) with RIGI. Post-translationally, phosphorylated by CDK2. Highly expressed in fetal liver. Detected in adult liver cells, ovarian oocytes, seminiferous tubules of the testes and pelvic region of the kidney. It was not detected in heart, gut, lung, spleen and skeletal muscle. Earliest specific in situ marker of hepatic differentiation during embryogenesis, useful for characterization of inductive events involved in hepatic specification.

Its subcellular location is the cytoplasm. The protein localises to the nucleus. In terms of biological role, could play pivotal roles in cell cycle and DNA regulation. Involved in innate immune defense against viruse by positively regulating the viral dsRNA receptors RIGI and IFIH1 signaling pathways. Involves in NOD2- and NOD1-mediated responses to bacteria suggesting a role in innate antibacterial immune pathways too. Could play a central role for the formation and/or maintenance of the blood vessels of the circulation system. This chain is Ankyrin repeat domain-containing protein 17 (Ankrd17), found in Mus musculus (Mouse).